Reading from the N-terminus, the 264-residue chain is Undecaprenyl-diphosphatase (264 aa).

A run of 7 helical transmembrane segments spans residues 38-58 (RSDF…VLVF), 75-95 (REYV…GLVV), 106-126 (VSPV…VEAY), 136-156 (VTWT…VFPG), 181-201 (FVFL…FLEM), 217-237 (VAFL…MGYI), and 242-262 (FTAF…WLPS).

It belongs to the UppP family.

The protein resides in the cell inner membrane. It carries out the reaction di-trans,octa-cis-undecaprenyl diphosphate + H2O = di-trans,octa-cis-undecaprenyl phosphate + phosphate + H(+). Catalyzes the dephosphorylation of undecaprenyl diphosphate (UPP). Confers resistance to bacitracin. This is Undecaprenyl-diphosphatase from Stenotrophomonas maltophilia (strain R551-3).